The chain runs to 123 residues: Protein Wnt-7b (123 aa).

A lipid anchor (O-palmitoleoyl serine; by PORCN) is attached at Ser1. The interval 33–61 is disordered linker; it reads VEVVRASRLRQPTFLKIKQIRSYQKPMET. Cys89 and Cys104 are joined by a disulfide. Asn90 carries N-linked (GlcNAc...) asparagine glycosylation.

It belongs to the Wnt family. Palmitoleoylation is required for efficient binding to frizzled receptors. Depalmitoleoylation leads to Wnt signaling pathway inhibition.

It localises to the secreted. It is found in the extracellular space. Its subcellular location is the extracellular matrix. Ligand for members of the frizzled family of seven transmembrane receptors that functions in the canonical Wnt/beta-catenin signaling pathway. Required for normal fusion of the chorion and the allantois during placenta development. Required for central nervous system (CNS) angiogenesis and blood-brain barrier regulation. The chain is Protein Wnt-7b (WNT-7B) from Sceloporus occidentalis (Western fence lizard).